The sequence spans 288 residues: Transposase InsF for insertion sequence IS3A (288 aa).

An Integrase catalytic domain is found at 124–287 (YASGPNQKWA…SPEQFENKNL (164 aa)).

This sequence belongs to the transposase IS3/IS150/IS904 family.

Functionally, involved in the transposition of the insertion sequence IS3. The protein is Transposase InsF for insertion sequence IS3A (insF1) of Escherichia coli (strain K12).